Reading from the N-terminus, the 260-residue chain is Ribosomal RNA small subunit methyltransferase A (260 aa).

6 residues coordinate S-adenosyl-L-methionine: N16, L18, G43, E64, D86, and N108.

The protein belongs to the class I-like SAM-binding methyltransferase superfamily. rRNA adenine N(6)-methyltransferase family. RsmA subfamily.

The protein localises to the cytoplasm. The catalysed reaction is adenosine(1518)/adenosine(1519) in 16S rRNA + 4 S-adenosyl-L-methionine = N(6)-dimethyladenosine(1518)/N(6)-dimethyladenosine(1519) in 16S rRNA + 4 S-adenosyl-L-homocysteine + 4 H(+). In terms of biological role, specifically dimethylates two adjacent adenosines (A1518 and A1519) in the loop of a conserved hairpin near the 3'-end of 16S rRNA in the 30S particle. May play a critical role in biogenesis of 30S subunits. In Buchnera aphidicola subsp. Baizongia pistaciae (strain Bp), this protein is Ribosomal RNA small subunit methyltransferase A.